A 223-amino-acid polypeptide reads, in one-letter code: Agamous-like MADS-box protein AGL11 (223 aa).

The MADS-box domain occupies 1 to 61; it reads MGRGKIEIKR…GRVYEYSNNN (61 aa). The K-box domain maps to 87–177; sequence AQYYQQESAK…RTKIAEVERL (91 aa).

The protein resides in the nucleus. In terms of biological role, probable transcription factor involved in seed development. The sequence is that of Agamous-like MADS-box protein AGL11 from Vitis vinifera (Grape).